Reading from the N-terminus, the 96-residue chain is UPF0235 protein Tola_0962 (96 aa).

Belongs to the UPF0235 family.

In Tolumonas auensis (strain DSM 9187 / NBRC 110442 / TA 4), this protein is UPF0235 protein Tola_0962.